The following is a 143-amino-acid chain: MESSEVMIMRIIQTAGKRKSAVARATIKEGNGRVRVNYKPVEILEPEIARFTIMEPLVIAGEEILGKVDVDVKVEGGGFMGQAEAARIAIARALVEWTGDMNLKEKFMKYDRTMLVGDSRRTEPHKPNRSTKGPRAKRQKSYR.

Positions 118–143 (DSRRTEPHKPNRSTKGPRAKRQKSYR) are disordered. Residues 127 to 143 (PNRSTKGPRAKRQKSYR) show a composition bias toward basic residues.

Belongs to the universal ribosomal protein uS9 family.

The protein is Small ribosomal subunit protein uS9 of Thermococcus sibiricus (strain DSM 12597 / MM 739).